The chain runs to 152 residues: MTQSLQVKLLDPRFGDLWPLPAYATEASAGMDLRAALEAPMTLEPGDAALIPSGIAIHLDDPQVCAVILPRSGLGHRHGIVLGNGTGLIDADYQGPLLISTWNRGREAFTIEPGDRIAQLVILPIVRVSLQVVDTFVDSARGAGGFGHTGVR.

Residues 71–73 (RSG), Asn-84, and 88–90 (LID) contribute to the substrate site.

It belongs to the dUTPase family. Mg(2+) serves as cofactor.

It catalyses the reaction dUTP + H2O = dUMP + diphosphate + H(+). It functions in the pathway pyrimidine metabolism; dUMP biosynthesis; dUMP from dCTP (dUTP route): step 2/2. In terms of biological role, this enzyme is involved in nucleotide metabolism: it produces dUMP, the immediate precursor of thymidine nucleotides and it decreases the intracellular concentration of dUTP so that uracil cannot be incorporated into DNA. The protein is Deoxyuridine 5'-triphosphate nucleotidohydrolase of Xanthomonas campestris pv. campestris (strain 8004).